The primary structure comprises 614 residues: Ankyrin repeat domain-containing protein 55 (614 aa).

Residues 1-20 (MMRQATMDFSTPSVFDQQRG) form a disordered region. Polar residues predominate over residues 7–16 (MDFSTPSVFD). ANK repeat units lie at residues 26–55 (VDLTMVYQAASNGDVNALTAVIREDPSILE), 60–89 (EGCTPLMHAVSGRQADTVKLLLKMGANINM), 93–125 (YGRTSLCLATYLGWLEGCVSLLRNGAKHNIPDK), 126–157 (NGRLPLHAATAEPDMRLLTVLLQQSNISEINH), 161–190 (EGMTPLHWAAFHNQPQHTQMLLKKGADPTL), 194–223 (DFKTALHWAVQSGNRILCSIILSHHQGPSI), 230–260 (SGKTCVHIAAAAGFSDIIHELARVPECNLQA), 264–293 (DDRTPLHWAAAAGKAECVQSLLELGMDSNL), and 297–326 (NESTPLAYALYCGHTACVKLLSQESRTEPT). 4 disordered regions span residues 319-339 (QESRTEPTRPPPSQSSRPQKK), 354-375 (KKEEQRAHQKDPSRDRYREEDT), 454-476 (TSHAGLSSAPHHMAQRSQKSRSE), and 564-614 (RNNL…SDEN). Residues 354-373 (KKEEQRAHQKDPSRDRYREE) are compositionally biased toward basic and acidic residues. Position 475 is a phosphoserine (Ser-475).

The chain is Ankyrin repeat domain-containing protein 55 (ANKRD55) from Homo sapiens (Human).